Reading from the N-terminus, the 1187-residue chain is Myelin transcription factor 1-like protein (1187 aa).

The segment at 1-20 (MDVDAEEKRHRTRSKGVRVP) is disordered. The segment at 22-65 (EPAIQELFSCPTPGCDGSGHVSGKYARHRSVYGCPLAKKRKTQD) adopts a CCHHC-type 1 zinc-finger fold. Zn(2+) is bound by residues cysteine 31, cysteine 36, histidine 49, and cysteine 55. Disordered stretches follow at residues 56–178 (PLAK…QMSC) and 221–248 (RTES…GRKS). A compositionally biased stretch (acidic residues) spans 89–172 (ECYESDGTED…EEEEEEEENE (84 aa)). Position 251 is a phosphoserine (serine 251). Disordered stretches follow at residues 343–422 (SETN…DRSE) and 450–509 (REKM…PTPG). A compositionally biased stretch (polar residues) spans 344-358 (ETNPQDRSQPPNMSV). Composition is skewed to basic and acidic residues over residues 362–377 (VRQE…DRSY), 401–412 (AKEDGCHERDDD), and 450–504 (REKM…RESK). 2 CCHHC-type zinc fingers span residues 496-539 (SRTE…PPEI) and 540-583 (LAMH…KLAK). Zn(2+) contacts are provided by cysteine 505, cysteine 510, histidine 523, cysteine 529, cysteine 549, cysteine 554, histidine 567, and cysteine 573. The disordered stretch occupies residues 684–708 (ASPSSSTTSSYAPSSSSNLSCGGGS). 3 consecutive CCHHC-type zinc fingers follow at residues 895–938 (LATS…GIRI), 944–987 (DKED…QKDG), and 997–1040 (KSVK…MKKA). 12 residues coordinate Zn(2+): cysteine 904, cysteine 909, histidine 922, cysteine 928, cysteine 953, cysteine 958, histidine 971, cysteine 977, cysteine 1006, cysteine 1011, histidine 1024, and cysteine 1030. Residues 1055-1131 (SNGIENDEEI…LANLSQSLIH (77 aa)) adopt a coiled-coil conformation.

Belongs to the MYT1 family. In terms of assembly, interacts with SIN3B. As to expression, brain, testis and pituitary gland. Expression is higher in the brain than in the testis and pituitary gland. Highest level expression seen in the developing CNS.

The protein localises to the nucleus. It localises to the chromosome. Transcription factor that plays a key role in neuronal differentiation. Acts by specifically repressing expression of non-neuronal genes during neuron differentiation. In contrast to other transcription repressors that inhibit specific lineages, mediates repression of multiple differentiation programs. Also represses expression of negative regulators of neurogenesis, such as members of the Notch signaling pathway, including HES1. The combination of three transcription factors, ASCL1, POU3F2/BRN2 and MYT1L, is sufficient to reprogram fibroblasts and other somatic cells into induced neuronal (iN) cells in vitro. Directly binds the 5'-AAGTT-3' core motif present on the promoter of target genes and represses transcription by recruiting a multiprotein complex containing SIN3B. The 5'-AAGTT-3' core motif is absent from the promoter of neural genes. The chain is Myelin transcription factor 1-like protein (Myt1l) from Rattus norvegicus (Rat).